We begin with the raw amino-acid sequence, 913 residues long: MAGNVKKSSGAGGGGSGGSGAGGLIGLMKDAFQPHHHHHHLSPHPPCTVDKKMVEKCWKLMDKVVRLCQNPKLALKNSPPYILDLLPDTYQHLRTVLSRYEGKMETLGENEYFRVFMENLMKKTKQTISLFKEGKERMYEENSQPRRNLTKLSLIFSHMLAELKGIFPSGLFQGDTFRITKADAAEFWRKAFGEKTIVPWKSFRQALHEVHPISSGLEAMALKSTIDLTCNDYISVFEFDIFTRLFQPWSSLLRNWNSLAVTHPGYMAFLTYDEVKARLQKFIHKPGSYIFRLSCTRLGQWAIGYVTADGNILQTIPHNKPLFQALIDGFREGFYLFPDGRNQNPDLTGLCEPTPQDHIKVTQEQYELYCEMGSTFQLCKICAENDKDVKIEPCGHLMCTSCLTSWQESEGQGCPFCRCEIKGTEPIVVDPFDPRGSGSLLRQGAEGAPSPNYDDDDDERADDSLFMMKELAGAKVERPSSPFSMAPQASLPPVPPRLDLLQQRAPVPASTSVLGTASKAASGSLHKDKPLPIPPTLRDLPPPPPPDRPYSVGAETRPQRRPLPCTPGDCPSRDKLPPVPSSRPGDSWLSRPIPKVPVATPNPGDPWNGRELTNRHSLPFSLPSQMEPRADVPRLGSTFSLDTSMTMNSSPVAGPESEHPKIKPSSSANAIYSLAARPLPMPKLPPGEQGESEEDTEYMTPTSRPVGVQKPEPKRPLEATQSSRACDCDQQIDSCTYEAMYNIQSQALSVAENSASGEGNLATAHTSTGPEESENEDDGYDVPKPPVPAVLARRTLSDISNASSSFGWLSLDGDPTNFNEGSQVPERPPKPFPRRINSERKASSYQQGGGATANPVATAPSPQLSSEIERLMSQGYSYQDIQKALVIAHNNIEMAKNILREFVSISSPAHVAT.

Residues 1–355 (MAGNVKKSSG…DLTGLCEPTP (355 aa)) are sufficient for interaction with EPHB1. Residues 45–173 (PPCTVDKKMV…KGIFPSGLFQ (129 aa)) are 4H. One can recognise a Cbl-PTB domain in the interval 45 to 349 (PPCTVDKKMV…GRNQNPDLTG (305 aa)). The EF-hand-like stretch occupies residues 174–246 (GDTFRITKAD…FEFDIFTRLF (73 aa)). Residues Asp227, Thr229, Asn231, Tyr233, and Glu238 each contribute to the Ca(2+) site. Residues 247–349 (QPWSSLLRNW…GRNQNPDLTG (103 aa)) are SH2-like. Arg292 provides a ligand contact to 4-O-phospho-L-tyrosine. Positions 350 to 378 (LCEPTPQDHIKVTQEQYELYCEMGSTFQL) are linker. A required for ubiquitination of SPRED2 region spans residues 356–913 (QDHIKVTQEQ…SISSPAHVAT (558 aa)). Residue Tyr369 is modified to Phosphotyrosine. Residues 379–418 (CKICAENDKDVKIEPCGHLMCTSCLTSWQESEGQGCPFCR) form an RING-type zinc finger. 2 disordered regions span residues 430–460 (DPFD…DDER) and 476–613 (VERP…RELT). Phosphoserine occurs at positions 437, 450, and 481. Residues 509–521 (ASTSVLGTASKAA) are compositionally biased toward polar residues. Positions 531-548 (LPIPPTLRDLPPPPPPDR) are enriched in pro residues. 4 positions are modified to phosphoserine: Ser617, Ser640, Ser666, and Ser667. The interaction with CD2AP stretch occupies residues 646–913 (TMNSSPVAGP…SISSPAHVAT (268 aa)). A disordered region spans residues 647–727 (MNSSPVAGPE…EATQSSRACD (81 aa)). A Phosphotyrosine modification is found at Tyr672. Ser692 carries the post-translational modification Phosphoserine. Phosphotyrosine; by ABL1 is present on Tyr698. Position 737 is a phosphotyrosine; by SRC (Tyr737). The segment covering 750–770 (VAENSASGEGNLATAHTSTGP) has biased composition (polar residues). Disordered regions lie at residues 750–787 (VAEN…KPPV) and 814–863 (DPTN…PSPQ). The segment covering 771–780 (EESENEDDGY) has biased composition (acidic residues). The residue at position 780 (Tyr780) is a Phosphotyrosine. The 40-residue stretch at 863 to 902 (QLSSEIERLMSQGYSYQDIQKALVIAHNNIEMAKNILREF) folds into the UBA domain. At Ser907 the chain carries Phosphoserine.

As to quaternary structure, forms homodimers; IFT20 promotes the formation of stable homodimers. Interacts (phosphorylated) with PIK3R1. Interacts with phosphorylated LAT2. Associates with NCK via its SH3 domain. The phosphorylated C-terminus interacts with CD2AP via its second SH3 domain. Binds to UBE2L3. Interacts with adapters SLA, SLA2 and with the phosphorylated C-terminus of SH2B2. Interacts with EGFR, SYK and ZAP70 via the highly conserved Cbl-N region. Interacts with FGR. Also interacts with BLK, SORBS1 and INPPL1/SHIP2. Interacts with CBLB. Interacts with TEK/TIE2 (tyrosine phosphorylated). Interacts with ALK, AXL and FGFR2. Interacts with CSF1R, EPHB1, FLT1, KDR, PDGFRA and PDGFRB; regulates receptor degradation through ubiquitination. Interacts with HCK and LYN. Interacts with ATX2. Interacts with SH3KBP1 and this interaction is inhibited in the presence of SHKBP1 or ARAP1. Interacts with SIGLEC10. Interacts with IFT20. Interacts with SPRY2; the interaction inhibits CBL-mediated ubiquitination of EGFR. Interacts (phosphorylated at Tyr-780) with tensin TNS4 (via SH2 domain); the interaction is enhanced in the presence of EGF and reduces interaction of CBL with EGFR. Interacts with EGFR; the interaction is reduced in the presence of TNS4. Interacts with CD5. Interacts with CD93. Post-translationally, phosphorylated on tyrosine residues by ALK, EGFR, FGR, INSR, SYK, FYN and ZAP70. Phosphorylated on several tyrosine residues by constitutively activated FGFR3. Phosphorylated on tyrosine residues by activated PDGFRA and PDGFRB. Phosphorylated on tyrosine residues in response to CSF1R, FLT1 and KIT signaling. Phosphorylated on tyrosine residues by HCK. Ubiquitinated, leading to its degradation via the proteasome. Ubiquitination is negatively regulated by IFT20.

The protein resides in the cytoplasm. It is found in the cell membrane. The protein localises to the cell projection. Its subcellular location is the cilium. It localises to the golgi apparatus. The enzyme catalyses S-ubiquitinyl-[E2 ubiquitin-conjugating enzyme]-L-cysteine + [acceptor protein]-L-lysine = [E2 ubiquitin-conjugating enzyme]-L-cysteine + N(6)-ubiquitinyl-[acceptor protein]-L-lysine.. It participates in protein modification; protein ubiquitination. Functionally, E3 ubiquitin-protein ligase that acts as a negative regulator of many signaling pathways by mediating ubiquitination of cell surface receptors. Accepts ubiquitin from specific E2 ubiquitin-conjugating enzymes, and then transfers it to substrates promoting their degradation by the proteasome. Recognizes activated receptor tyrosine kinases, including KIT, FLT1, FGFR1, FGFR2, PDGFRA, PDGFRB, CSF1R, EPHA8 and KDR and mediates their ubiquitination to terminate signaling. Recognizes membrane-bound HCK, SRC and other kinases of the SRC family and mediates their ubiquitination and degradation. Ubiquitinates EGFR and SPRY2. Ubiquitinates NECTIN1 following association between NECTIN1 and herpes simplex virus 1/HHV-1 envelope glycoprotein D, leading to NECTIN1 removal from cell surface. Participates in signal transduction in hematopoietic cells. Plays an important role in the regulation of osteoblast differentiation and apoptosis. Essential for osteoclastic bone resorption. The 'Tyr-731' phosphorylated form induces the activation and recruitment of phosphatidylinositol 3-kinase to the cell membrane in a signaling pathway that is critical for osteoclast function. May be functionally coupled with the E2 ubiquitin-protein ligase UB2D3. In association with CBLB, required for proper feedback inhibition of ciliary platelet-derived growth factor receptor-alpha (PDGFRA) signaling pathway via ubiquitination and internalization of PDGFRA. In Mus musculus (Mouse), this protein is E3 ubiquitin-protein ligase CBL (Cbl).